The chain runs to 423 residues: MSMALIVRPFFVPGSAGISGSRNICKKNQWRKYLLKPSGSSINCSFSTEKNPLLPSIQQLADARLIYSVSAALGHNKESHPECSARVPAIVNALEMNELTPKFRGSQILELANFKTATVEDIANVHDKAYVFGLEKAMDEASDSGLIFIEGSGPTYATSTTFQDSLIAAGAGMALVDSVIAASRNSVDPPIGFALIRPPGHHAVPKGPMGFCVFGNVAIAARHAQRTHGLKRIFIIDFDVHHGNGTNDAFTEDPDIFFLSTHQDGSYPGTGKISDIGKGKGEGTTLNLPLPGGSGDIAMRTVFEEIIVPCAQRFKPDIILVSAGYDAHVLDPLANLQFTTATYYSLAKDIKRLAKEVCGGRCVFFLEGGYNLESLSSSVADSFRALLGEDSLASEFDNPAYLYDEPMRKVRDAIQRAKSIHCL.

The N-terminal 44 residues, 1–44 (MSMALIVRPFFVPGSAGISGSRNICKKNQWRKYLLKPSGSSINC), are a transit peptide targeting the chloroplast. The histone deacetylase stretch occupies residues 62–392 (DARLIYSVSA…FRALLGEDSL (331 aa)). The active-site Proton donor/acceptor is the histidine 202. The Zn(2+) site is built by aspartate 239, histidine 241, and aspartate 326.

It belongs to the histone deacetylase family. In terms of assembly, interacts with PP2A2. Zn(2+) serves as cofactor. In terms of tissue distribution, expressed in stems, leaves, flowers, siliques and mature seeds.

It localises to the nucleus. Its subcellular location is the cytoplasm. It is found in the plastid. The protein resides in the chloroplast stroma. The protein localises to the mitochondrion. The enzyme catalyses N-acetylserotonin + H2O = serotonin + acetate. It catalyses the reaction N-acetyltyramine + H2O = tyramine + acetate. It carries out the reaction N-acetyltryptamine + H2O = tryptamine + acetate. The catalysed reaction is melatonin + H2O = 5-methoxytryptamine + acetate. Its activity is inhibited by trichostatin A (TSA), a known histone deacetylase inhibitor. In terms of biological role, regulates lysine acetylation levels of plastid proteins related to photosynthesis. Involved in the regulation of the activation state of RuBisCO, which is controlled by lysine acetylation of RuBisCO activase under low-light conditions. Associates with alpha- and beta-tubulins and deacetylate alpha-tubulin. Does not seem to be required for the cellular patterning in the root epidermis. Involved in the regulation of melatonin biosynthesis by catalyzing the deacetylation of N-acetylserotonin to produce serotonin. N-acetylserotonin is methylated by acetylserotonin O-methyltransferase (ASMT) to produce melatonin (N-acetyl-5-methoxytryptamine). Deacetylates melatonin to produce 5-methoxytryptamine. In vitro, deacetylates N-acetyltyramine and N-acetyltryptamine to produce tyramine and tryptamine, respectively. This Arabidopsis thaliana (Mouse-ear cress) protein is Histone deacetylase 14, chloroplastic.